We begin with the raw amino-acid sequence, 482 residues long: Solute carrier family 49 member A3 (482 aa).

The next 12 helical transmembrane spans lie at 41–61, 81–101, 109–129, 150–170, 181–201, 206–226, 264–284, 296–316, 330–350, 355–375, 390–410, and 437–457; these read WFVLGVICLLSCTNAMLWISF, YLSLVYLIIAIPVGFGASWLI, AIVFSSWLNMIGSIIRCGAIV, LCAIAQPLVLFVPAKLASVWF, IASMSNPLGVLLANIISPSVV, YIAHMLGIYTVPAIAACILAT, VILMLCFGAGIGIFTAISSFL, LFAGVCGALFIFFGFIGAFVC, VKTCFALTALTSIAFALVINF, VLVACVCSLLGLFGFAISPVG, SSTGLAFISGQIQGIIYMILF, and TSMLVMAALCSFGSCIFIIFF.

The protein belongs to the major facilitator superfamily.

The protein resides in the membrane. The polypeptide is Solute carrier family 49 member A3 (slc49a3) (Xenopus tropicalis (Western clawed frog)).